The chain runs to 355 residues: Replication-associated protein (355 aa).

The region spanning 11-114 is the CRESS-DNA virus Rep endonuclease domain; the sequence is SHRNANTFLT…PLAVFERGTF (104 aa). Positions 18–21 match the RCR-1 motif; the sequence is FLTY. A divalent metal cation is bound by residues glutamate 52, histidine 60, and histidine 62. Residues 60 to 62 carry the RCR-2 motif; that stretch reads HLH. Catalysis depends on tyrosine 100, which acts as the For DNA cleavage activity. An RCR-3 motif is present at residues 100–103; sequence YILK. Glutamate 104 contacts a divalent metal cation. The oligomerization stretch occupies residues 175–187; it reads SANKLFPEIQEEF. An ATP-binding site is contributed by 229–236; sequence GPTRTGKS. The tract at residues 252 to 270 is transactivation; sequence VDWSSYNEDAIYNIVDDIP. The Nuclear localization signal signature appears at 292-303; the sequence is KYGKKKKVQKKS.

This sequence belongs to the geminiviridae Rep protein family. In terms of assembly, homooligomer. Rep binds to repeated DNA motifs (iterons). Forms the O-complex, which is a Rep-DNA complex involved in the initiation of RCR. Part of the C- and V-complexes which are RepA-Rep-DNA complexes involved in the c-sense and v-sense transcription. The cofactor is Mg(2+). Mn(2+) serves as cofactor.

It localises to the host nucleus. In terms of biological role, essential for the replication of viral ssDNA. The closed circular ssDNA genome is first converted to a superhelical dsDNA. Rep binds a specific region at the genome origin of replication. It introduces an endonucleolytic nick within the conserved sequence 5'-TAATATTAC-3' in the intergenic region of the genome present in all geminiviruses, thereby initiating the rolling circle replication (RCR). Following cleavage, binds covalently to the 5'-phosphate of DNA as a tyrosyl ester. The cleavage gives rise to a free 3'-OH that serves as a primer for the cellular DNA polymerase. The polymerase synthesizes the (+) strand DNA by rolling circle mechanism. After one round of replication, a Rep-catalyzed nucleotidyl transfer reaction releases a circular single-stranded virus genome, thereby terminating the replication. Displays origin-specific DNA cleavage, nucleotidyl transferase, ATPase and helicase activities. Acts as an inhibitor of C-sense gene transcription. The polypeptide is Replication-associated protein (Maize streak virus genotype A (isolate South Africa) (MSV)).